A 50-amino-acid chain; its full sequence is LCNERPSQTWSGNCGNTAHCDKQCQDWEKASHGACHKRENHWKCFCYFNC.

4 disulfides stabilise this stretch: Cys2–Cys50, Cys14–Cys35, Cys20–Cys44, and Cys24–Cys46.

Belongs to the DEFL family.

It localises to the secreted. Its function is as follows. Possesses antimicrobial activity sensitive to inorganic cations. Binds specifically to the fungal plasma membrane. Has no inhibitory effect on insect gut alpha-amylase. The chain is Defensin-like protein 1 from Aesculus hippocastanum (Horse chestnut).